Reading from the N-terminus, the 465-residue chain is Cysteine--tRNA ligase (465 aa).

C27 contributes to the Zn(2+) binding site. The short motif at 29–39 is the 'HIGH' region element; it reads PTTYNYIHIGN. Positions 207, 232, and 236 each coordinate Zn(2+). The 'KMSKS' region motif lies at 264–268; sequence KMSKS. K267 is an ATP binding site.

It belongs to the class-I aminoacyl-tRNA synthetase family. Monomer. Requires Zn(2+) as cofactor.

Its subcellular location is the cytoplasm. The enzyme catalyses tRNA(Cys) + L-cysteine + ATP = L-cysteinyl-tRNA(Cys) + AMP + diphosphate. This chain is Cysteine--tRNA ligase, found in Carboxydothermus hydrogenoformans (strain ATCC BAA-161 / DSM 6008 / Z-2901).